Consider the following 486-residue polypeptide: Aspartyl/glutamyl-tRNA(Asn/Gln) amidotransferase subunit B (486 aa).

The protein belongs to the GatB/GatE family. GatB subfamily. Heterotrimer of A, B and C subunits.

It catalyses the reaction L-glutamyl-tRNA(Gln) + L-glutamine + ATP + H2O = L-glutaminyl-tRNA(Gln) + L-glutamate + ADP + phosphate + H(+). The enzyme catalyses L-aspartyl-tRNA(Asn) + L-glutamine + ATP + H2O = L-asparaginyl-tRNA(Asn) + L-glutamate + ADP + phosphate + 2 H(+). Its function is as follows. Allows the formation of correctly charged Asn-tRNA(Asn) or Gln-tRNA(Gln) through the transamidation of misacylated Asp-tRNA(Asn) or Glu-tRNA(Gln) in organisms which lack either or both of asparaginyl-tRNA or glutaminyl-tRNA synthetases. The reaction takes place in the presence of glutamine and ATP through an activated phospho-Asp-tRNA(Asn) or phospho-Glu-tRNA(Gln). The polypeptide is Aspartyl/glutamyl-tRNA(Asn/Gln) amidotransferase subunit B (Orientia tsutsugamushi (strain Ikeda) (Rickettsia tsutsugamushi)).